Consider the following 1240-residue polypeptide: DNA-directed RNA polymerase subunit beta (1240 aa).

It belongs to the RNA polymerase beta chain family. In terms of assembly, the RNAP catalytic core consists of 2 alpha, 1 beta, 1 beta' and 1 omega subunit. When a sigma factor is associated with the core the holoenzyme is formed, which can initiate transcription.

The enzyme catalyses RNA(n) + a ribonucleoside 5'-triphosphate = RNA(n+1) + diphosphate. Its function is as follows. DNA-dependent RNA polymerase catalyzes the transcription of DNA into RNA using the four ribonucleoside triphosphates as substrates. This chain is DNA-directed RNA polymerase subunit beta, found in Rhodopirellula baltica (strain DSM 10527 / NCIMB 13988 / SH1).